The sequence spans 89 residues: Small ribosomal subunit protein uS15 (89 aa).

Belongs to the universal ribosomal protein uS15 family. Part of the 30S ribosomal subunit. Forms a bridge to the 50S subunit in the 70S ribosome, contacting the 23S rRNA.

One of the primary rRNA binding proteins, it binds directly to 16S rRNA where it helps nucleate assembly of the platform of the 30S subunit by binding and bridging several RNA helices of the 16S rRNA. Functionally, forms an intersubunit bridge (bridge B4) with the 23S rRNA of the 50S subunit in the ribosome. This Mycolicibacterium vanbaalenii (strain DSM 7251 / JCM 13017 / BCRC 16820 / KCTC 9966 / NRRL B-24157 / PYR-1) (Mycobacterium vanbaalenii) protein is Small ribosomal subunit protein uS15.